Here is a 58-residue protein sequence, read N- to C-terminus: Rho-conotoxin TIA (58 aa).

Positions 1 to 16 (MFTVFLLVVLATTGVS) are cleaved as a signal peptide. Residues 17 to 38 (FTLDRASDGGNAVAKKSDVTAR) constitute a propeptide that is removed on maturation. Residues 40–42 (NWR) form an interaction with ADRA1B region. 2 cysteine pairs are disulfide-bonded: cysteine 43–cysteine 49 and cysteine 44–cysteine 57. The segment at 45 to 47 (LIP) is lacks the Ser-Xaa-Pro motif that is crucial for potent interaction with nAChR. At cysteine 57 the chain carries Cysteine amide.

This sequence belongs to the conotoxin A superfamily. As to expression, expressed by the venom duct.

The protein resides in the secreted. Its function is as follows. Allosteric inhibitor of alpha-1B adrenergic receptors (ADRA1B). Binds to an allosteric modulatory site on transmembrane helix 6 and 7 at the base of extracellular loop 3 of ADRA1B. Also weakly inhibits alpha-1A (ADRA1A) and alpha-1D (ADRA1D) adrenergic receptors in a competitive manner. Potently inhibits contractions of vas deferens, spleen and aorta in response to noradrenaline. May also inhibits nicotinic acetylcholine receptors with a possible distinct nAChR binding mode from other alpha-conotoxins, due to a different three residue motif (lacks the Ser-Xaa-Pro motif). This Conus tulipa (Fish-hunting cone snail) protein is Rho-conotoxin TIA.